Reading from the N-terminus, the 294-residue chain is 4-hydroxy-tetrahydrodipicolinate synthase (294 aa).

T45 lines the pyruvate pocket. The active-site Proton donor/acceptor is the Y133. K162 (schiff-base intermediate with substrate) is an active-site residue. Residue I204 coordinates pyruvate.

This sequence belongs to the DapA family. In terms of assembly, homotetramer; dimer of dimers.

The protein localises to the cytoplasm. It catalyses the reaction L-aspartate 4-semialdehyde + pyruvate = (2S,4S)-4-hydroxy-2,3,4,5-tetrahydrodipicolinate + H2O + H(+). The protein operates within amino-acid biosynthesis; L-lysine biosynthesis via DAP pathway; (S)-tetrahydrodipicolinate from L-aspartate: step 3/4. In terms of biological role, catalyzes the condensation of (S)-aspartate-beta-semialdehyde [(S)-ASA] and pyruvate to 4-hydroxy-tetrahydrodipicolinate (HTPA). The polypeptide is 4-hydroxy-tetrahydrodipicolinate synthase (Rhizobium meliloti (strain 1021) (Ensifer meliloti)).